A 100-amino-acid polypeptide reads, in one-letter code: Large ribosomal subunit protein uL23 (100 aa).

This sequence belongs to the universal ribosomal protein uL23 family. In terms of assembly, part of the 50S ribosomal subunit. Contacts protein L29, and trigger factor when it is bound to the ribosome.

One of the early assembly proteins it binds 23S rRNA. One of the proteins that surrounds the polypeptide exit tunnel on the outside of the ribosome. Forms the main docking site for trigger factor binding to the ribosome. The protein is Large ribosomal subunit protein uL23 of Shewanella frigidimarina (strain NCIMB 400).